A 293-amino-acid chain; its full sequence is Acetylglutamate kinase (293 aa).

Substrate is bound by residues Gly68 to Gly69, Arg90, and Asn189.

Belongs to the acetylglutamate kinase family. ArgB subfamily.

It is found in the cytoplasm. The catalysed reaction is N-acetyl-L-glutamate + ATP = N-acetyl-L-glutamyl 5-phosphate + ADP. It functions in the pathway amino-acid biosynthesis; L-arginine biosynthesis; N(2)-acetyl-L-ornithine from L-glutamate: step 2/4. Catalyzes the ATP-dependent phosphorylation of N-acetyl-L-glutamate. The sequence is that of Acetylglutamate kinase from Caldicellulosiruptor saccharolyticus (strain ATCC 43494 / DSM 8903 / Tp8T 6331).